Here is a 902-residue protein sequence, read N- to C-terminus: DNA mismatch repair protein MutS (902 aa).

647–654 lines the ATP pocket; the sequence is GPNMGGKS.

It belongs to the DNA mismatch repair MutS family.

Functionally, this protein is involved in the repair of mismatches in DNA. It is possible that it carries out the mismatch recognition step. This protein has a weak ATPase activity. This chain is DNA mismatch repair protein MutS, found in Nitrosospira multiformis (strain ATCC 25196 / NCIMB 11849 / C 71).